Here is an 821-residue protein sequence, read N- to C-terminus: Calpain-3 (821 aa).

Residues 7–37 form a disordered region; that stretch reads ASVAPRTAAEPRSPGPVPHPAQSKATEAGGG. In terms of domain architecture, Calpain catalytic spans 74-417; the sequence is LYVDPEFPPD…FTKLEICNLT (344 aa). Active-site residues include Cys-129, His-334, and Asn-358. Residues 418–586 are domain III; it reads ADALQSDKLQ…KRNLSEEVEN (169 aa). The tract at residues 587–649 is linker; that stretch reads TISVDRPVKK…QPGSSDQESE (63 aa). The segment at 609-652 is disordered; the sequence is ANSNKELGVDQESEEGKGKTSPDKQKQSPQPQPGSSDQESEEQQ. A compositionally biased stretch (basic and acidic residues) spans 622-634; sequence EEGKGKTSPDKQK. Residues 635 to 645 are compositionally biased toward low complexity; that stretch reads QSPQPQPGSSD. EF-hand domains lie at 649–683, 692–725, 722–757, and 787–821; these read EEQQ…VVNK, FTLE…NKIK, NKIK…AGFH, and VRLE…TMYA. A domain IV region spans residues 650–821; that stretch reads EQQQFRNIFK…LEWLQLTMYA (172 aa). Residues Ala-662, Asp-665, Glu-667, Glu-672, Asp-705, Asp-707, Ser-709, Lys-711, Glu-716, Asp-735, Asp-737, Ser-739, Thr-741, Glu-746, Asp-800, Asp-802, Asp-804, and Ile-806 each contribute to the Ca(2+) site.

This sequence belongs to the peptidase C2 family. As to quaternary structure, homodimer; via EF-hand domain 4. Interacts with TTN/titin. Interacts with CMYA5; this interaction, which results in CMYA5 proteolysis, may protect CAPN3 from autolysis. Interacts with SIMC1. Interacts with UTP25; the interaction is required for CAPN3 translocation to the nucleolus. In terms of tissue distribution, isoform I is skeletal muscle specific.

The protein localises to the cytoplasm. It is found in the nucleus. The protein resides in the nucleolus. It carries out the reaction Broad endopeptidase activity.. Its activity is regulated as follows. Activated by micromolar concentrations of calcium and inhibited by calpastatin. Functionally, calcium-regulated non-lysosomal thiol-protease. Proteolytically cleaves CTBP1 at 'His-409'. Mediates, with UTP25, the proteasome-independent degradation of p53/TP53. The polypeptide is Calpain-3 (Homo sapiens (Human)).